Reading from the N-terminus, the 258-residue chain is Glucose 1-dehydrogenase 2 (258 aa).

11 to 35 serves as a coordination point for NADP(+); that stretch reads IVTGSSKGIGKAIAERFGKEKMNVV. Position 146 (Ser146) interacts with substrate. Catalysis depends on Tyr159, which acts as the Proton acceptor.

The protein belongs to the short-chain dehydrogenases/reductases (SDR) family. In terms of assembly, homotetramer.

It carries out the reaction D-glucose + NAD(+) = D-glucono-1,5-lactone + NADH + H(+). It catalyses the reaction D-glucose + NADP(+) = D-glucono-1,5-lactone + NADPH + H(+). The sequence is that of Glucose 1-dehydrogenase 2 (ycdF) from Bacillus subtilis (strain 168).